The following is a 1194-amino-acid chain: Immunoglobulin superfamily member 3 (1194 aa).

A signal peptide spans Met1–Ala19. Ig-like C2-type domains lie at Gln20–Asn138, Pro143–Met262, Pro276–Thr386, Pro401–Thr539, Phe545–Leu661, Pro676–Ser803, Pro813–Thr945, and Pro949–Thr1097. The Extracellular segment spans residues Gln20–Ala1124. 2 disulfides stabilise this stretch: Cys42–Cys120 and Cys167–Cys246. The N-linked (GlcNAc...) asparagine glycan is linked to Asn43. An EWI motif motif is present at residues Glu250–Ile252. Residues Cys302 and Cys376 are joined by a disulfide bond. The N-linked (GlcNAc...) asparagine glycan is linked to Asn418. Cystine bridges form between Cys432–Cys511 and Cys566–Cys645. Asn655 is a glycosylation site (N-linked (GlcNAc...) asparagine). 3 disulfide bridges follow: Cys701–Cys782, Cys838–Cys918, and Cys974–Cys1080. N-linked (GlcNAc...) asparagine glycosylation is present at Asn842. The segment at Ala997–Leu1033 is disordered. Residues Glu1007–Pro1027 show a composition bias toward acidic residues. The N-linked (GlcNAc...) asparagine glycan is linked to Asn1077. A helical transmembrane segment spans residues Leu1125–Leu1145. Topologically, residues Leu1146 to Asp1194 are cytoplasmic.

Expressed in a wide range of tissues with High expression in Placenta, kidney and lung.

It is found in the membrane. The sequence is that of Immunoglobulin superfamily member 3 (IGSF3) from Homo sapiens (Human).